We begin with the raw amino-acid sequence, 228 residues long: Cytidylate kinase (228 aa).

Residue 17-25 (GPSASGKGT) coordinates ATP.

This sequence belongs to the cytidylate kinase family. Type 1 subfamily.

It is found in the cytoplasm. It carries out the reaction CMP + ATP = CDP + ADP. It catalyses the reaction dCMP + ATP = dCDP + ADP. This Paraburkholderia phytofirmans (strain DSM 17436 / LMG 22146 / PsJN) (Burkholderia phytofirmans) protein is Cytidylate kinase.